Reading from the N-terminus, the 81-residue chain is Sec-independent protein translocase protein TatA (81 aa).

A helical membrane pass occupies residues Met-1–Gly-21. The interval Lys-41–Gly-81 is disordered.

This sequence belongs to the TatA/E family. In terms of assembly, the Tat system comprises two distinct complexes: a TatABC complex, containing multiple copies of TatA, TatB and TatC subunits, and a separate TatA complex, containing only TatA subunits. Substrates initially bind to the TatABC complex, which probably triggers association of the separate TatA complex to form the active translocon.

It is found in the cell inner membrane. Its function is as follows. Part of the twin-arginine translocation (Tat) system that transports large folded proteins containing a characteristic twin-arginine motif in their signal peptide across membranes. TatA could form the protein-conducting channel of the Tat system. In Beijerinckia indica subsp. indica (strain ATCC 9039 / DSM 1715 / NCIMB 8712), this protein is Sec-independent protein translocase protein TatA.